The chain runs to 146 residues: Hemoglobin subunit beta (146 aa).

One can recognise a Globin domain in the interval 2-146 (HWSAEEKQLI…VAHALARKYH (145 aa)). Residues H63 and H92 each contribute to the heme b site.

Belongs to the globin family. In terms of assembly, heterotetramer of two alpha chains and two beta chains. In terms of tissue distribution, red blood cells.

Functionally, involved in oxygen transport from the lung to the various peripheral tissues. The polypeptide is Hemoglobin subunit beta (HBB) (Anser indicus (Bar-headed goose)).